The following is a 199-amino-acid chain: Recombination protein RecR (199 aa).

The C4-type zinc-finger motif lies at Cys-58–Cys-73. Residues Thr-81–Thr-176 enclose the Toprim domain.

It belongs to the RecR family.

In terms of biological role, may play a role in DNA repair. It seems to be involved in an RecBC-independent recombinational process of DNA repair. It may act with RecF and RecO. In Rhodopirellula baltica (strain DSM 10527 / NCIMB 13988 / SH1), this protein is Recombination protein RecR.